Reading from the N-terminus, the 362-residue chain is Histidinol-phosphate aminotransferase (362 aa).

Residue Lys220 is modified to N6-(pyridoxal phosphate)lysine.

It belongs to the class-II pyridoxal-phosphate-dependent aminotransferase family. Histidinol-phosphate aminotransferase subfamily. Homodimer. It depends on pyridoxal 5'-phosphate as a cofactor.

The enzyme catalyses L-histidinol phosphate + 2-oxoglutarate = 3-(imidazol-4-yl)-2-oxopropyl phosphate + L-glutamate. It participates in amino-acid biosynthesis; L-histidine biosynthesis; L-histidine from 5-phospho-alpha-D-ribose 1-diphosphate: step 7/9. This Rhodospirillum centenum (strain ATCC 51521 / SW) protein is Histidinol-phosphate aminotransferase.